Reading from the N-terminus, the 169-residue chain is U3 small nucleolar ribonucleoprotein protein imp3 (169 aa).

Residues 109 to 166 (RRLPVVMCRLKMCETVSTSVKYVEHGHVRVGPEVITDPAFFVTRNMEDFVTWVDSSKI) enclose the S4 RNA-binding domain.

It belongs to the universal ribosomal protein uS4 family. As to quaternary structure, component of a heterotrimeric complex containing imp3, imp4 and mpp10.

Its subcellular location is the nucleus. It localises to the nucleolus. Its function is as follows. Component of the U3 small nucleolar ribonucleoprotein. Required for the early cleavages at sites A0, A1 and A2 during 18S ribosomal pre-RNA processing. The protein is U3 small nucleolar ribonucleoprotein protein imp3 (RBP) of Pneumocystis carinii.